The primary structure comprises 346 residues: Calcium uniporter protein, mitochondrial (346 aa).

Residues 1 to 195 (MTKGKLLTTP…ECDKAAHRGA (195 aa)) are Mitochondrial matrix-facing. Positions 55-120 (ELPPPDPQDS…GEGKDEGEFV (66 aa)) are disordered. Composition is skewed to basic and acidic residues over residues 76–91 (MEAK…KADT) and 109–119 (REGEGKDEGEF). The helical transmembrane segment at 196–216 (QRIALAGCGGLIGYWYIVYRL) threads the bilayer. Residues 217 to 226 (TFETDLGWDV) are Mitochondrial intermembrane-facing. Residues 224–232 (WDVMEPVTY) carry the Selectivity filter motif. A helical transmembrane segment spans residues 227–248 (MEPVTYLVGLSTLIGGYMWFLW). Position 228 (glutamate 228) interacts with Ca(2+). Topologically, residues 249-346 (HNREVSYRSA…KEGEEDDEDD (98 aa)) are mitochondrial matrix. The tract at residues 306-346 (WNETQDEGGDEKVTKALRDERKNNNGTKNKSKEGEEDDEDD) is disordered. Residues 315 to 328 (DEKVTKALRDERKN) show a composition bias toward basic and acidic residues.

This sequence belongs to the MCU (TC 1.A.77) family. Homotetramer, assembles in a dimer or dimers configuration with two interfaces.

It is found in the mitochondrion inner membrane. The enzyme catalyses Ca(2+)(in) = Ca(2+)(out). Functionally, highly selective calcium channel localized to the inner mitochondrial membrane, which mediates calcium uptake into the mitochondrial matrix. Mitochondrial calcium homeostasis plays key roles in cellular physiology and regulates ATP production, cytoplasmic calcium signals and activation of cell death pathways. Sufficient to operate as a pore-forming channel without the need of calcium-sensor or auxiliary subunit. This is Calcium uniporter protein, mitochondrial from Cyphellophora europaea (strain CBS 101466) (Phialophora europaea).